The primary structure comprises 129 residues: Phosphoribosyl-AMP cyclohydrolase (129 aa).

D85 lines the Mg(2+) pocket. Residue C86 coordinates Zn(2+). Positions 87 and 89 each coordinate Mg(2+). Positions 102 and 109 each coordinate Zn(2+).

This sequence belongs to the PRA-CH family. Homodimer. Mg(2+) serves as cofactor. Requires Zn(2+) as cofactor.

It localises to the cytoplasm. It carries out the reaction 1-(5-phospho-beta-D-ribosyl)-5'-AMP + H2O = 1-(5-phospho-beta-D-ribosyl)-5-[(5-phospho-beta-D-ribosylamino)methylideneamino]imidazole-4-carboxamide. The protein operates within amino-acid biosynthesis; L-histidine biosynthesis; L-histidine from 5-phospho-alpha-D-ribose 1-diphosphate: step 3/9. Catalyzes the hydrolysis of the adenine ring of phosphoribosyl-AMP. This chain is Phosphoribosyl-AMP cyclohydrolase, found in Methanococcus maripaludis (strain C6 / ATCC BAA-1332).